The following is a 214-amino-acid chain: uncharacterized protein (214 aa).

The transit peptide at 1–49 (MATRGAVAAAASTIWKHRRNPSLRSLSRHFNPNFNHRIIPTGFKYQVRA) directs the protein to the chloroplast.

The protein resides in the plastid. Its subcellular location is the chloroplast. This is an uncharacterized protein from Arabidopsis thaliana (Mouse-ear cress).